Consider the following 157-residue polypeptide: DNA gyrase inhibitor (157 aa).

The protein belongs to the DNA gyrase inhibitor family. In terms of assembly, interacts with DNA gyrase.

It localises to the cytoplasm. Inhibits the supercoiling activity of DNA gyrase. Acts by inhibiting DNA gyrase at an early step, prior to (or at the step of) binding of DNA by the gyrase. It protects cells against toxins that target DNA gyrase, by inhibiting activity of these toxins and reducing the formation of lethal double-strand breaks in the cell. The chain is DNA gyrase inhibitor from Yersinia enterocolitica serotype O:8 / biotype 1B (strain NCTC 13174 / 8081).